A 432-amino-acid polypeptide reads, in one-letter code: D-amino acid dehydrogenase 1 (432 aa).

Residue 3 to 17 coordinates FAD; sequence VLILGSGVVGTVSAY.

This sequence belongs to the DadA oxidoreductase family. It depends on FAD as a cofactor.

The catalysed reaction is a D-alpha-amino acid + A + H2O = a 2-oxocarboxylate + AH2 + NH4(+). Oxidative deamination of D-amino acids. The sequence is that of D-amino acid dehydrogenase 1 (dadA1) from Pseudomonas putida (strain ATCC 47054 / DSM 6125 / CFBP 8728 / NCIMB 11950 / KT2440).